The sequence spans 196 residues: ATP-dependent Clp protease proteolytic subunit (196 aa).

Serine 101 (nucleophile) is an active-site residue. Histidine 126 is a catalytic residue.

The protein belongs to the peptidase S14 family. As to quaternary structure, component of the chloroplastic Clp protease core complex.

The protein localises to the plastid. It localises to the chloroplast stroma. The catalysed reaction is Hydrolysis of proteins to small peptides in the presence of ATP and magnesium. alpha-casein is the usual test substrate. In the absence of ATP, only oligopeptides shorter than five residues are hydrolyzed (such as succinyl-Leu-Tyr-|-NHMec, and Leu-Tyr-Leu-|-Tyr-Trp, in which cleavage of the -Tyr-|-Leu- and -Tyr-|-Trp bonds also occurs).. Functionally, cleaves peptides in various proteins in a process that requires ATP hydrolysis. Has a chymotrypsin-like activity. Plays a major role in the degradation of misfolded proteins. This Helianthus annuus (Common sunflower) protein is ATP-dependent Clp protease proteolytic subunit.